Reading from the N-terminus, the 112-residue chain is MKQVIIVRSDLKMGKGKIAAQACHASIGSFKRTEEDKIRKWELEGSKKVIVSVNSLDELLEIYRAVKEAGISNYLVRDAGHTQIPAGTITCLGIGPDDDEKIDKITGDLKLL.

It belongs to the PTH2 family.

It localises to the cytoplasm. The catalysed reaction is an N-acyl-L-alpha-aminoacyl-tRNA + H2O = an N-acyl-L-amino acid + a tRNA + H(+). Its function is as follows. The natural substrate for this enzyme may be peptidyl-tRNAs which drop off the ribosome during protein synthesis. This chain is Peptidyl-tRNA hydrolase, found in Methanothermobacter thermautotrophicus (strain ATCC 29096 / DSM 1053 / JCM 10044 / NBRC 100330 / Delta H) (Methanobacterium thermoautotrophicum).